Consider the following 348-residue polypeptide: Sulfate/thiosulfate import ATP-binding protein CysA (348 aa).

In terms of domain architecture, ABC transporter spans 3 to 237; the sequence is IEIRNITKSF…PATPFVCQFI (235 aa). 35-42 is an ATP binding site; that stretch reads GPSGCGKT.

This sequence belongs to the ABC transporter superfamily. Sulfate/tungstate importer (TC 3.A.1.6) family. In terms of assembly, the complex is composed of two ATP-binding proteins (CysA), two transmembrane proteins (CysT and CysW) and a solute-binding protein (CysP).

The protein localises to the cell inner membrane. It catalyses the reaction sulfate(out) + ATP + H2O = sulfate(in) + ADP + phosphate + H(+). It carries out the reaction thiosulfate(out) + ATP + H2O = thiosulfate(in) + ADP + phosphate + H(+). Its function is as follows. Part of the ABC transporter complex CysAWTP involved in sulfate/thiosulfate import. Responsible for energy coupling to the transport system. This chain is Sulfate/thiosulfate import ATP-binding protein CysA, found in Methylococcus capsulatus (strain ATCC 33009 / NCIMB 11132 / Bath).